The chain runs to 450 residues: Phosphoglucosamine mutase (450 aa).

The active-site Phosphoserine intermediate is S102. Mg(2+) contacts are provided by S102, D244, D246, and D248. The residue at position 102 (S102) is a Phosphoserine.

It belongs to the phosphohexose mutase family. It depends on Mg(2+) as a cofactor. In terms of processing, activated by phosphorylation.

It catalyses the reaction alpha-D-glucosamine 1-phosphate = D-glucosamine 6-phosphate. In terms of biological role, catalyzes the conversion of glucosamine-6-phosphate to glucosamine-1-phosphate. The sequence is that of Phosphoglucosamine mutase from Nitratidesulfovibrio vulgaris (strain ATCC 29579 / DSM 644 / CCUG 34227 / NCIMB 8303 / VKM B-1760 / Hildenborough) (Desulfovibrio vulgaris).